We begin with the raw amino-acid sequence, 461 residues long: Nuclear distribution protein PAC1 (461 aa).

The LisH domain occupies Q9–E41. A coiled-coil region spans residues T61–T88. WD repeat units follow at residues S114 to K155, H157 to R197, G201 to T248, G251 to R290, G295 to L355, G357 to K396, V401 to R444, and V446 to N461.

Belongs to the WD repeat LIS1/nudF family. In terms of assembly, self-associates. Interacts with NDL1 and dynein.

The protein localises to the cytoplasm. The protein resides in the cytoskeleton. Its subcellular location is the spindle pole. In terms of biological role, positively regulates the activity of the minus-end directed microtubule motor protein dynein. May enhance dynein-mediated microtubule sliding by targeting dynein to the microtubule plus end. Required for nuclear migration during vegetative growth as well as development. Required for retrograde early endosome (EE) transport from the hyphal tip. Required for localization of dynein to the mitotic spindle poles. Recruits additional proteins to the dynein complex at SPBs. This chain is Nuclear distribution protein PAC1, found in Pyricularia oryzae (strain 70-15 / ATCC MYA-4617 / FGSC 8958) (Rice blast fungus).